The sequence spans 115 residues: Large ribosomal subunit protein bL21 (115 aa).

Belongs to the bacterial ribosomal protein bL21 family. Part of the 50S ribosomal subunit. Contacts protein L20.

In terms of biological role, this protein binds to 23S rRNA in the presence of protein L20. The polypeptide is Large ribosomal subunit protein bL21 (Picosynechococcus sp. (strain ATCC 27264 / PCC 7002 / PR-6) (Agmenellum quadruplicatum)).